We begin with the raw amino-acid sequence, 569 residues long: Endonuclease/exonuclease/phosphatase family domain-containing protein 1 (569 aa).

Gly-2 carries the N-myristoyl glycine lipid modification. Phosphoserine occurs at positions 16 and 25. The 30-residue stretch at 38–67 (ERLNINTATEEELMTLPGVTRAVARSIVEY) folds into the HhH domain. Residues Ser-106, Ser-110, Ser-160, and Ser-173 each carry the phosphoserine modification. The tract at residues 200-224 (SRPPSTHTNGGLTFTAKPHPSPTSL) is disordered. Residues 202-211 (PPSTHTNGGL) show a composition bias toward polar residues. Thr-265 bears the Phosphothreonine mark. Positions 549–569 (VPRNGNGVTLEPSEANIKHER) are disordered.

This Mus musculus (Mouse) protein is Endonuclease/exonuclease/phosphatase family domain-containing protein 1 (Eepd1).